A 363-amino-acid chain; its full sequence is Mitochondrial RNA-splicing protein MRS1 (363 aa).

Homodimer. Forms a ribonucleoprotein complex composed of maturase bI3 and 2 dimers of MRS1 that assemble around the bI3 RNA.

The protein resides in the mitochondrion matrix. Its function is as follows. Function in mitochondrial RNA splicing in the excision of mitochondrial group I introns aI5 beta from COX1 and bI3 from COB transcripts and thus would be involved in obtaining the correct structure of the intron, to allow the RNA catalyzed reactions to occur. This is Mitochondrial RNA-splicing protein MRS1 (MRS1) from Saccharomyces cerevisiae (strain ATCC 204508 / S288c) (Baker's yeast).